The following is a 137-amino-acid chain: Putative pre-16S rRNA nuclease (137 aa).

The protein belongs to the YqgF nuclease family.

It is found in the cytoplasm. Functionally, could be a nuclease involved in processing of the 5'-end of pre-16S rRNA. This Bacillus mycoides (strain KBAB4) (Bacillus weihenstephanensis) protein is Putative pre-16S rRNA nuclease.